The chain runs to 282 residues: Putative phosphoenolpyruvate synthase regulatory protein (282 aa).

162–169 serves as a coordination point for ADP; it reads GVSRSGKT.

This sequence belongs to the pyruvate, phosphate/water dikinase regulatory protein family. PSRP subfamily.

The catalysed reaction is [pyruvate, water dikinase] + ADP = [pyruvate, water dikinase]-phosphate + AMP + H(+). It carries out the reaction [pyruvate, water dikinase]-phosphate + phosphate + H(+) = [pyruvate, water dikinase] + diphosphate. Bifunctional serine/threonine kinase and phosphorylase involved in the regulation of the phosphoenolpyruvate synthase (PEPS) by catalyzing its phosphorylation/dephosphorylation. The chain is Putative phosphoenolpyruvate synthase regulatory protein from Psychrobacter arcticus (strain DSM 17307 / VKM B-2377 / 273-4).